Consider the following 363-residue polypeptide: 3-isopropylmalate dehydrogenase (363 aa).

78-91 (GKKWDYLPIESRPE) serves as a coordination point for NAD(+). Substrate contacts are provided by arginine 99, arginine 109, arginine 138, and aspartate 227. 3 residues coordinate Mg(2+): aspartate 227, aspartate 251, and aspartate 255. 285–297 (GSAPDIEGKNIAN) is a binding site for NAD(+).

The protein belongs to the isocitrate and isopropylmalate dehydrogenases family. LeuB type 1 subfamily. As to quaternary structure, homodimer. Mg(2+) is required as a cofactor. Requires Mn(2+) as cofactor.

It localises to the cytoplasm. It carries out the reaction (2R,3S)-3-isopropylmalate + NAD(+) = 4-methyl-2-oxopentanoate + CO2 + NADH. It functions in the pathway amino-acid biosynthesis; L-leucine biosynthesis; L-leucine from 3-methyl-2-oxobutanoate: step 3/4. Its function is as follows. Catalyzes the oxidation of 3-carboxy-2-hydroxy-4-methylpentanoate (3-isopropylmalate) to 3-carboxy-4-methyl-2-oxopentanoate. The product decarboxylates to 4-methyl-2 oxopentanoate. The protein is 3-isopropylmalate dehydrogenase of Buchnera aphidicola subsp. Schizaphis graminum (strain Sg).